Here is a 432-residue protein sequence, read N- to C-terminus: Alpha-ketoglutarate permease (432 aa).

At 1–32 the chain is on the cytoplasmic side; that stretch reads MAESTVTADSKLTSSDTRRRIWAIVGASSGNL. A helical transmembrane segment spans residues 33–53; the sequence is VEWFDFYVYSFCSLYFAHIFF. Residues 54–62 are Periplasmic-facing; sequence PSGNTTTQL. The chain crosses the membrane as a helical span at residues 63-83; the sequence is LQTAGVFAAGFLMRPIGGWLF. Residues 84–95 are Cytoplasmic-facing; the sequence is GRIADKHGRKKS. A helical membrane pass occupies residues 96–116; the sequence is MLLSVCMMCFGSLVIACLPGY. Over 117 to 118 the chain is Periplasmic; that stretch reads ET. A helical transmembrane segment spans residues 119–139; that stretch reads IGTWAPALLLLARLFQGLSVG. The Cytoplasmic segment spans residues 140–162; it reads GEYGTSATYMSEVAVEGRKGFYA. Residues 163–183 traverse the membrane as a helical segment; it reads SFQYVTLIGGQLLALLVVVVL. Residues 184-193 lie on the Periplasmic side of the membrane; the sequence is QHTMEDAALR. Residues 194 to 214 traverse the membrane as a helical segment; it reads EWGWRIPFALGAVLAVVALWL. The Cytoplasmic segment spans residues 215–243; that stretch reads RRQLDETSQQETRALKEAGSLKGLWRNRR. A helical membrane pass occupies residues 244–264; it reads AFIMVLGFTAAGSLCFYTFTT. The Periplasmic segment spans residues 265–279; that stretch reads YMQKYLVNTAGMHAN. Residues 280–300 form a helical membrane-spanning segment; it reads VASGIMTAALFVFMLIQPLIG. Topologically, residues 301-309 are cytoplasmic; sequence ALSDKIGRR. The helical transmembrane segment at 310–330 threads the bilayer; the sequence is TSMLCFGSLAAIFTVPILSAL. Over 331 to 339 the chain is Periplasmic; that stretch reads QNVSSPYAA. The chain crosses the membrane as a helical span at residues 340-360; sequence FGLVMCALLIVSFYTSISGIL. Over 361–373 the chain is Cytoplasmic; it reads KAEMFPAQVRALG. Residues 374 to 394 form a helical membrane-spanning segment; sequence VGLSYAVANAIFGGSAEYVAL. Over 395 to 402 the chain is Periplasmic; that stretch reads SLKSIGME. The chain crosses the membrane as a helical span at residues 403–423; the sequence is TAFFWYVTLMAVVAFLVSLML. The Cytoplasmic portion of the chain corresponds to 424–432; that stretch reads HRKGKGMRL.

The protein belongs to the major facilitator superfamily. Metabolite:H+ Symporter (MHS) family (TC 2.A.1.6) family.

Its subcellular location is the cell inner membrane. Uptake of alpha-ketoglutarate across the boundary membrane with the concomitant import of a cation (symport system). This Escherichia coli (strain K12) protein is Alpha-ketoglutarate permease (kgtP).